The primary structure comprises 780 residues: Vezatin (780 aa).

2 consecutive transmembrane segments (helical) span residues alanine 140–phenylalanine 160 and threonine 162–isoleucine 182. The stretch at valine 430–alanine 467 forms a coiled coil. 2 disordered regions span residues aspartate 620–threonine 718 and glutamine 757–lysine 780. The span at serine 624–alanine 643 shows a compositional bias: polar residues. Basic and acidic residues-rich tracts occupy residues glutamate 647–tyrosine 663 and threonine 690–alanine 699. The segment covering proline 702–alanine 711 has biased composition (low complexity). Residues phenylalanine 761–lysine 780 are compositionally biased toward acidic residues.

It belongs to the vezatin family. Interacts with USH2A (via the cytoplasmic region); the interaction associates VEZT with the USH2 complex at the stereocilia base. Interacts with myosin MYO7A and the cadherin-catenins complex. As to expression, expressed in developing cochlear hair cells. Isoform 1, isoform 2 and isoform 3 are expressed in testis. In the seminiferous epithelium, present exclusively in the acrosome of spermatids (at protein level).

It localises to the cell membrane. Its subcellular location is the cell projection. The protein localises to the stereocilium membrane. The protein resides in the cell junction. It is found in the adherens junction. It localises to the nucleus. Its subcellular location is the cytoplasmic vesicle. The protein localises to the secretory vesicle. The protein resides in the acrosome. Plays a pivotal role in the establishment of adherens junctions and their maintenance in adult life. Required for morphogenesis of the preimplantation embryo, and for the implantation process. The protein is Vezatin of Mus musculus (Mouse).